Here is a 371-residue protein sequence, read N- to C-terminus: Transaldolase (371 aa).

Lys-132 is covalently cross-linked (Isoglutamyl lysine isopeptide (Lys-Gln) (interchain with Q-Cter in protein Pup)). The active-site Schiff-base intermediate with substrate is Lys-142.

It belongs to the transaldolase family. Type 2 subfamily.

The protein localises to the cytoplasm. The catalysed reaction is D-sedoheptulose 7-phosphate + D-glyceraldehyde 3-phosphate = D-erythrose 4-phosphate + beta-D-fructose 6-phosphate. It participates in carbohydrate degradation; pentose phosphate pathway; D-glyceraldehyde 3-phosphate and beta-D-fructose 6-phosphate from D-ribose 5-phosphate and D-xylulose 5-phosphate (non-oxidative stage): step 2/3. Transaldolase is important for the balance of metabolites in the pentose-phosphate pathway. The polypeptide is Transaldolase (tal) (Mycolicibacterium smegmatis (strain ATCC 700084 / mc(2)155) (Mycobacterium smegmatis)).